Consider the following 938-residue polypeptide: Isoleucine--tRNA ligase (938 aa).

The 'HIGH' region signature appears at 58–68; it reads PYANGNIHIGH. L-isoleucyl-5'-AMP is bound at residue Glu561. A 'KMSKS' region motif is present at residues 602–606; the sequence is KMSKS. Lys605 provides a ligand contact to ATP. 4 residues coordinate Zn(2+): Cys901, Cys904, Cys921, and Cys924.

It belongs to the class-I aminoacyl-tRNA synthetase family. IleS type 1 subfamily. As to quaternary structure, monomer. It depends on Zn(2+) as a cofactor.

It localises to the cytoplasm. It catalyses the reaction tRNA(Ile) + L-isoleucine + ATP = L-isoleucyl-tRNA(Ile) + AMP + diphosphate. In terms of biological role, catalyzes the attachment of isoleucine to tRNA(Ile). As IleRS can inadvertently accommodate and process structurally similar amino acids such as valine, to avoid such errors it has two additional distinct tRNA(Ile)-dependent editing activities. One activity is designated as 'pretransfer' editing and involves the hydrolysis of activated Val-AMP. The other activity is designated 'posttransfer' editing and involves deacylation of mischarged Val-tRNA(Ile). The polypeptide is Isoleucine--tRNA ligase (Yersinia pseudotuberculosis serotype O:1b (strain IP 31758)).